The chain runs to 669 residues: Methionine--tRNA ligase (669 aa).

Positions 14–24 (YYPSGKLHIGN) match the 'HIGH' region motif. H161 contributes to the Zn(2+) binding site. Positions 309–313 (KMSKS) match the 'KMSKS' region motif. Position 312 (K312) interacts with ATP. Positions 566–669 (DFDKVELKVA…KEMPNGAGIA (104 aa)) constitute a tRNA-binding domain.

It belongs to the class-I aminoacyl-tRNA synthetase family. MetG type 2B subfamily. Homodimer.

It localises to the cytoplasm. The enzyme catalyses tRNA(Met) + L-methionine + ATP = L-methionyl-tRNA(Met) + AMP + diphosphate. Its function is as follows. Is required not only for elongation of protein synthesis but also for the initiation of all mRNA translation through initiator tRNA(fMet) aminoacylation. The chain is Methionine--tRNA ligase from Enterococcus faecalis (strain ATCC 700802 / V583).